An 89-amino-acid polypeptide reads, in one-letter code: Exodeoxyribonuclease 7 small subunit (89 aa).

The tract at residues 1–23 (MRPWRCVSMAKAPAAPSSTQPDP) is disordered.

Belongs to the XseB family. As to quaternary structure, heterooligomer composed of large and small subunits.

It localises to the cytoplasm. It catalyses the reaction Exonucleolytic cleavage in either 5'- to 3'- or 3'- to 5'-direction to yield nucleoside 5'-phosphates.. Bidirectionally degrades single-stranded DNA into large acid-insoluble oligonucleotides, which are then degraded further into small acid-soluble oligonucleotides. The chain is Exodeoxyribonuclease 7 small subunit from Acidovorax sp. (strain JS42).